Reading from the N-terminus, the 300-residue chain is Cation-efflux pump FieF (300 aa).

The next 4 helical transmembrane spans lie at 12–32, 39–59, 82–102, and 114–134; these read AAIA…FAWW, ILAA…NLLV, AALA…LTGI, and PGVG…LVTF. Zn(2+) is bound by residues Asp-45 and Asp-49. Zn(2+) is bound by residues His-153 and Asp-157. Residues 164–184 form a helical membrane-spanning segment; sequence ILVALGLAWYGWHRADALFAL.

Belongs to the cation diffusion facilitator (CDF) transporter (TC 2.A.4) family. FieF subfamily. In terms of assembly, homodimer.

Its subcellular location is the cell inner membrane. It carries out the reaction Zn(2+)(in) + H(+)(out) = Zn(2+)(out) + H(+)(in). It catalyses the reaction Cd(2+)(in) + H(+)(out) = Cd(2+)(out) + H(+)(in). The catalysed reaction is Fe(2+)(in) + H(+)(out) = Fe(2+)(out) + H(+)(in). In terms of biological role, divalent metal cation transporter which exports Zn(2+), Cd(2+) and possibly Fe(2+). May be involved in zinc and iron detoxification by efflux. This is Cation-efflux pump FieF from Citrobacter koseri (strain ATCC BAA-895 / CDC 4225-83 / SGSC4696).